A 144-amino-acid chain; its full sequence is Large ribosomal subunit protein uL15 (144 aa).

The interval 1–53 (MRLNTLSPAEGSKHASKRPGRGIGSGLGKTGGRGHKGQKSRSGGGVRRGFEGG) is disordered. Positions 21–31 (RGIGSGLGKTG) are enriched in gly residues.

This sequence belongs to the universal ribosomal protein uL15 family. As to quaternary structure, part of the 50S ribosomal subunit.

Binds to the 23S rRNA. This chain is Large ribosomal subunit protein uL15, found in Sodalis glossinidius (strain morsitans).